The following is a 227-amino-acid chain: uncharacterized protein (227 aa).

3 consecutive transmembrane segments (helical) span residues 109–128 (MCNVGLVLMMVFAAFYFAGI), 173–192 (AILLSVTLLALTPVIGILLT), and 199–221 (ALRVIFLVIAVEFVYAIFRVMMG).

Its subcellular location is the cell membrane. This is an uncharacterized protein from Archaeoglobus fulgidus (strain ATCC 49558 / DSM 4304 / JCM 9628 / NBRC 100126 / VC-16).